A 499-amino-acid chain; its full sequence is Glutamyl-tRNA(Gln) amidotransferase subunit A (499 aa).

Active-site charge relay system residues include Lys76 and Ser151. Ser175 acts as the Acyl-ester intermediate in catalysis.

Belongs to the amidase family. GatA subfamily. Heterotrimer of A, B and C subunits.

It catalyses the reaction L-glutamyl-tRNA(Gln) + L-glutamine + ATP + H2O = L-glutaminyl-tRNA(Gln) + L-glutamate + ADP + phosphate + H(+). In terms of biological role, allows the formation of correctly charged Gln-tRNA(Gln) through the transamidation of misacylated Glu-tRNA(Gln) in organisms which lack glutaminyl-tRNA synthetase. The reaction takes place in the presence of glutamine and ATP through an activated gamma-phospho-Glu-tRNA(Gln). This is Glutamyl-tRNA(Gln) amidotransferase subunit A from Rhodopirellula baltica (strain DSM 10527 / NCIMB 13988 / SH1).